The following is a 147-amino-acid chain: Large ribosomal subunit protein bL9 (147 aa).

This sequence belongs to the bacterial ribosomal protein bL9 family.

In terms of biological role, binds to the 23S rRNA. The polypeptide is Large ribosomal subunit protein bL9 (Mesoplasma florum (strain ATCC 33453 / NBRC 100688 / NCTC 11704 / L1) (Acholeplasma florum)).